Consider the following 541-residue polypeptide: Transmembrane protein 87A (541 aa).

A signal peptide spans 1-26; it reads MAAASFQPLKCLLLWVFFVITPPVKA. Over 27–209 the chain is Lumenal; sequence VPEPGIWTVP…HGFISASDWP (183 aa). Residues N52, N109, N148, and N189 are each glycosylated (N-linked (GlcNAc...) asparagine). Cystine bridges form between C65–C116 and C82–C416. A helical transmembrane segment spans residues 210-230; sequence LMIFYMVMCIMYILLALLWFI. Over 231–241 the chain is Cytoplasmic; that stretch reads WSACYWKDLLR. Residues 242–262 form a helical membrane-spanning segment; it reads IQFWIAAVIFLGMLEKAVYYA. The Lumenal segment spans residues 263–293; sequence EYQNTDNTGVSSHGLLIFAELISSIKRTLAR. Residues 294-314 traverse the membrane as a helical segment; that stretch reads LLVTIVSLGYGIIKPRLGAVM. Residues 315 to 316 are Cytoplasmic-facing; sequence HR. A helical transmembrane segment spans residues 317–337; sequence VVGMGVLYFVFAAVEGVMRII. The Lumenal segment spans residues 338-344; the sequence is GAKEYDL. Residues 345–365 traverse the membrane as a helical segment; the sequence is VLLAGIPLALLDSGLCWWIFV. Over 366–384 the chain is Cytoplasmic; sequence SLAQTMKTLKLRKNTVKYS. A helical transmembrane segment spans residues 385–405; that stretch reads LYRHFTNTLIFAILASIIFMI. Topologically, residues 406–422 are lumenal; sequence WRTKKFQLVDCQADWME. The helical transmembrane segment at 423–443 threads the bilayer; it reads LWVDDAYWRFLFFIILLVIMF. Residues 444 to 541 are Cytoplasmic-facing; it reads LWRPSANNQR…MTKYEMSKIE (98 aa).

It belongs to the LU7TM family. TMEM87 subfamily.

The protein resides in the cell membrane. It localises to the golgi apparatus membrane. Its function is as follows. Potential monoatomic ion channel gated by mechanical force, implicated in normal touch sensitivity through the generation of mechanically activated currents. However, a direct channel activity is debated and an alternative could be that it functions as a chaperone for an unidentified mechanosensitive ion channel. Could also be involved in cell mechanosensitivity regulating cell adhesion and migration. May also be involved in retrograde transport from endosomes to the trans-Golgi network (TGN). This is Transmembrane protein 87A from Xenopus tropicalis (Western clawed frog).